The primary structure comprises 66 residues: Large ribosomal subunit protein bL31 (66 aa).

Zn(2+)-binding residues include C16, C18, C36, and C39.

This sequence belongs to the bacterial ribosomal protein bL31 family. Type A subfamily. Part of the 50S ribosomal subunit. Requires Zn(2+) as cofactor.

Binds the 23S rRNA. This is Large ribosomal subunit protein bL31 from Campylobacter lari (strain RM2100 / D67 / ATCC BAA-1060).